Here is a 300-residue protein sequence, read N- to C-terminus: Ribosomal RNA small subunit methyltransferase H (300 aa).

S-adenosyl-L-methionine is bound by residues 46–48 (GGH), aspartate 65, phenylalanine 92, aspartate 107, and glutamine 114.

This sequence belongs to the methyltransferase superfamily. RsmH family.

The protein localises to the cytoplasm. It carries out the reaction cytidine(1402) in 16S rRNA + S-adenosyl-L-methionine = N(4)-methylcytidine(1402) in 16S rRNA + S-adenosyl-L-homocysteine + H(+). Its function is as follows. Specifically methylates the N4 position of cytidine in position 1402 (C1402) of 16S rRNA. This chain is Ribosomal RNA small subunit methyltransferase H, found in Prochlorococcus marinus (strain AS9601).